A 344-amino-acid chain; its full sequence is Anthranilate phosphoribosyltransferase (344 aa).

Residues G79, 82–83 (GD), T87, 89–92 (NIST), 107–115 (KHGNRSVSS), and S119 contribute to the 5-phospho-alpha-D-ribose 1-diphosphate site. Position 79 (G79) interacts with anthranilate. Residue S91 participates in Mg(2+) binding. An anthranilate-binding site is contributed by N110. Anthranilate is bound at residue R165. Mg(2+) contacts are provided by D224 and E225.

This sequence belongs to the anthranilate phosphoribosyltransferase family. Homodimer. It depends on Mg(2+) as a cofactor.

It carries out the reaction N-(5-phospho-beta-D-ribosyl)anthranilate + diphosphate = 5-phospho-alpha-D-ribose 1-diphosphate + anthranilate. It functions in the pathway amino-acid biosynthesis; L-tryptophan biosynthesis; L-tryptophan from chorismate: step 2/5. Catalyzes the transfer of the phosphoribosyl group of 5-phosphorylribose-1-pyrophosphate (PRPP) to anthranilate to yield N-(5'-phosphoribosyl)-anthranilate (PRA). This chain is Anthranilate phosphoribosyltransferase, found in Salinibacter ruber (strain DSM 13855 / M31).